The following is a 142-amino-acid chain: uncharacterized protein (142 aa).

Homodimer.

This is an uncharacterized protein from Bacillus subtilis (strain 168).